Here is a 445-residue protein sequence, read N- to C-terminus: Tubulin beta-2 chain (445 aa).

GTP contacts are provided by Gln12, Glu73, Ser142, Gly146, Thr147, Gly148, Asn208, and Asn230. Mg(2+) is bound at residue Glu73.

This sequence belongs to the tubulin family. As to quaternary structure, dimer of alpha and beta chains. A typical microtubule is a hollow water-filled tube with an outer diameter of 25 nm and an inner diameter of 15 nM. Alpha-beta heterodimers associate head-to-tail to form protofilaments running lengthwise along the microtubule wall with the beta-tubulin subunit facing the microtubule plus end conferring a structural polarity. Microtubules usually have 13 protofilaments but different protofilament numbers can be found in some organisms and specialized cells. The cofactor is Mg(2+).

The protein resides in the cytoplasm. Its subcellular location is the cytoskeleton. Functionally, tubulin is the major constituent of microtubules, a cylinder consisting of laterally associated linear protofilaments composed of alpha- and beta-tubulin heterodimers. Microtubules grow by the addition of GTP-tubulin dimers to the microtubule end, where a stabilizing cap forms. Below the cap, tubulin dimers are in GDP-bound state, owing to GTPase activity of alpha-tubulin. This chain is Tubulin beta-2 chain (TUBB2), found in Suillus bovinus (Jersey cow bolete).